Consider the following 81-residue polypeptide: MNKQERLGMSVYLYYNRDARKLYKYGDVHYHSRRLRYLVIYVNKEDIVSVSKEIKHLKFVKDVRLSAIDDIDQDFVGNLYR.

This sequence belongs to the UPF0298 family.

It is found in the cytoplasm. This Streptococcus agalactiae serotype Ia (strain ATCC 27591 / A909 / CDC SS700) protein is UPF0298 protein SAK_1599.